The following is a 591-amino-acid chain: Serine/threonine-protein phosphatase PP2A 65 kDa regulatory subunit (591 aa).

Position 2 is an N-acetylalanine (A2). 15 HEAT repeats span residues 10 to 48 (DSLYPIAVLIDELKNEDVQLRLNSIKKLSTIALALGEER), 49 to 86 (TRSELIPFLTETIYDEDEVLLALADQLGNFTSLVGGPE), 87 to 125 (FAMYLIPPLESLATVEETVVRDKAVESLRTVAAEHSAQD), 126 to 163 (LEIHVVPTLQRLVSGDWFTSRTSACGLFSVCYPRVTQP), 164 to 202 (VKAELRANFRKLCQDETPMVRRAAANKLGEFAKVVETEY), 203 to 241 (LKSDLIPNFVQLAQDDQDSVRLLAVEACVSIAQLLPQDD), 242 to 280 (VEHLVLPTLRQCASDSSWRVRYMVAEKFVDLQKAVGPEI), 281 to 323 (TRVD…QVQI), 324 to 362 (ILSSILPYVRDLVSDPNPHVKSALASVIMGLSPMLGAYQ), 363 to 401 (TVEQLLPLFLIQLKDECPEVRLNIISNLDCVNDVIGIQQ), 402 to 440 (LSQSLLPAIVELAEDSKWRVRLAIIEYMPALAGQLGQEF), 441 to 479 (FDQKLRGLCMGWLNDHVYAIREAATLNMKKLVEQFGAPW), 480 to 518 (AEQAIIPMILVMSRNKNYLHRMTCLFCLNVLAEVCGTDI), 519 to 557 (TTKLLLPTVLLLAADPVANVRFNVAKTLQKISPFLEASV), and 558 to 591 (IDAQVKPTLDKLNTDTDVDVKHFAAQAIAGIAAA).

Belongs to the phosphatase 2A regulatory subunit A family. PP2A exists in several trimeric forms, all of which consist of a core composed of a catalytic subunit associated with a 65 kDa regulatory subunit (PR65) (subunit A). The core complex associates with a third, variable subunit (subunit B), which confers distinct properties to the holoenzyme. Interacts with the inorganic phosphate transporter PXo (CG10483). Component of the Integrator-PP2A (INTAC) complex, composed of the Integrator core complex and protein phosphatase 2A subunits mts/PP2A and Pp2A-29B. As to expression, expression varies in tissues throughout development. Highly distributed expression in early embryos. In late embryonal development, found at high levels in nervous system and gonads. In third instar larvae, found in brain, imaginal disks and salivary glands.

The protein resides in the nucleus. In terms of biological role, the PR65 subunit of protein phosphatase 2A serves as a scaffolding molecule to coordinate the assembly of the catalytic subunit and a variable regulatory B subunit. Key mediator of a quality checkpoint during transcription elongation as part of the Integrator-PP2A (INTAC) complex. The INTAC complex drives premature transcription termination of transcripts that are unfavorably configured for transcriptional elongation: within the INTAC complex, acts as a scaffolding subunit for mts/PP2A, which catalyzes dephosphorylation of the C-terminal domain (CTD) of Pol II subunit POLR2A/RPB1 and Spt5, thereby preventing transcriptional elongation. In Drosophila melanogaster (Fruit fly), this protein is Serine/threonine-protein phosphatase PP2A 65 kDa regulatory subunit (Pp2A-29B).